The primary structure comprises 89 residues: Histone H3.v2 (89 aa).

The protein belongs to the histone H3 family.

The protein is Histone H3.v2 (H3v2) of Dictyostelium discoideum (Social amoeba).